A 175-amino-acid chain; its full sequence is Crossover junction endodeoxyribonuclease RuvC (175 aa).

Active-site residues include Asp-11, Glu-71, and His-143. Asp-11, Glu-71, and His-143 together coordinate Mg(2+).

It belongs to the RuvC family. As to quaternary structure, homodimer which binds Holliday junction (HJ) DNA. The HJ becomes 2-fold symmetrical on binding to RuvC with unstacked arms; it has a different conformation from HJ DNA in complex with RuvA. In the full resolvosome a probable DNA-RuvA(4)-RuvB(12)-RuvC(2) complex forms which resolves the HJ. Mg(2+) is required as a cofactor.

The protein localises to the cytoplasm. It carries out the reaction Endonucleolytic cleavage at a junction such as a reciprocal single-stranded crossover between two homologous DNA duplexes (Holliday junction).. In terms of biological role, the RuvA-RuvB-RuvC complex processes Holliday junction (HJ) DNA during genetic recombination and DNA repair. Endonuclease that resolves HJ intermediates. Cleaves cruciform DNA by making single-stranded nicks across the HJ at symmetrical positions within the homologous arms, yielding a 5'-phosphate and a 3'-hydroxyl group; requires a central core of homology in the junction. The consensus cleavage sequence is 5'-(A/T)TT(C/G)-3'. Cleavage occurs on the 3'-side of the TT dinucleotide at the point of strand exchange. HJ branch migration catalyzed by RuvA-RuvB allows RuvC to scan DNA until it finds its consensus sequence, where it cleaves and resolves the cruciform DNA. The protein is Crossover junction endodeoxyribonuclease RuvC of Parvibaculum lavamentivorans (strain DS-1 / DSM 13023 / NCIMB 13966).